The primary structure comprises 90 residues: DNA-binding protein HU-beta (90 aa).

This sequence belongs to the bacterial histone-like protein family. Heterodimer of an alpha and a beta chain.

Histone-like DNA-binding protein which is capable of wrapping DNA to stabilize it, and thus to prevent its denaturation under extreme environmental conditions. The protein is DNA-binding protein HU-beta (hupB) of Pseudomonas aeruginosa (strain ATCC 15692 / DSM 22644 / CIP 104116 / JCM 14847 / LMG 12228 / 1C / PRS 101 / PAO1).